A 66-amino-acid polypeptide reads, in one-letter code: Scarabaecin (66 aa).

Residues 1–26 (MKTLTFYTLLLCAALYSNFFDCKAVA) form the signal peptide. Cysteine 46 and cysteine 57 are oxidised to a cystine.

It localises to the secreted. Possesses antifungal activity against phytopathogenic fungi such as P.oryzae, R.solani and B.cinerea but not against phytopathogenic bacteria. Shows weak activity against the insect pathogenic fungus B.bassiana and against S.aureus. Binds chitin. The sequence is that of Scarabaecin from Oryctes rhinoceros (Coconut rhinoceros beetle).